The chain runs to 766 residues: Pentatricopeptide repeat-containing protein At3g61520, mitochondrial (766 aa).

Residues 1–30 (MSIMLSISRRRNSYILLNHSRFLRRFSYDV) constitute a mitochondrion transit peptide. 16 PPR repeats span residues 151–181 (TVVATNLLIRWFGRMGMVNQSVLVYERLDSN), 184–218 (NSQVRNVVVDVLLRNGLVDDAFKVLDEMLQKESVF), 221–257 (NRITADIVLHEVWKGRLLTEEKIIALISRFSSHGVSP), 258–292 (NSVWLTRFISSLCKNARANAAWDILSDLMKNKTPL), 293–327 (EAPPFNALLSCLGRNMDISRMNDLVLKMDEVKIRP), 328–358 (DVVTLGILINTLCKSRRVDEALEVFEKMRGK), 369–404 (DSIHFNTLIDGLCKVGRLKEAEELLVRMKLEERCAP), 405–439 (NAVTYNCLIDGYCRAGKLETAKEVVSRMKEDEIKP), 440–474 (NVVTVNTIVGGMCRHHGLNMAVVFFMDMEKEGVKG), 475–509 (NVVTYMTLIHACCSVSNVEKAMYWYEKMLEAGCSP), 510–544 (DAKIYYALISGLCQVRRDHDAIRVVEKLKEGGFSL), 545–579 (DLLAYNMLIGLFCDKNNTEKVYEMLTDMEKEGKKP), 580–614 (DSITYNTLISFFGKHKDFESVERMMEQMREDGLDP), 615–650 (TVTTYGAVIDAYCSVGELDEALKLFKDMGLHSKVNP), 651–685 (NTVIYNILINAFSKLGNFGQALSLKEEMKMKMVRP), and 686–720 (NVETYNALFKCLNEKTQGETLLKLMDEMVEQSCEP).

It belongs to the PPR family. P subfamily.

It is found in the mitochondrion. The sequence is that of Pentatricopeptide repeat-containing protein At3g61520, mitochondrial from Arabidopsis thaliana (Mouse-ear cress).